The chain runs to 199 residues: Probable NADH dehydrogenase [ubiquinone] iron-sulfur protein 7, mitochondrial (199 aa).

Residues 1-16 (MLSALRTAGALSTRRL) constitute a mitochondrion transit peptide. [4Fe-4S] cluster is bound by residues Cys-74, Cys-75, Cys-139, and Cys-169.

This sequence belongs to the complex I 20 kDa subunit family. In terms of assembly, complex I is composed of 45 different subunits This is a component of the iron-sulfur (IP) fragment of the enzyme. Requires [4Fe-4S] cluster as cofactor.

The protein localises to the mitochondrion. It carries out the reaction a ubiquinone + NADH + 5 H(+)(in) = a ubiquinol + NAD(+) + 4 H(+)(out). Its function is as follows. Core subunit of the mitochondrial membrane respiratory chain NADH dehydrogenase (Complex I) that is believed to belong to the minimal assembly required for catalysis. Complex I functions in the transfer of electrons from NADH to the respiratory chain. The immediate electron acceptor for the enzyme is believed to be ubiquinone. In Caenorhabditis briggsae, this protein is Probable NADH dehydrogenase [ubiquinone] iron-sulfur protein 7, mitochondrial.